The sequence spans 356 residues: sn-glycerol-3-phosphate import ATP-binding protein UgpC (356 aa).

One can recognise an ABC transporter domain in the interval 4-235 (LKLQAVTKSW…PASLFVASFI (232 aa)). 37 to 44 (GPSGCGKS) contacts ATP.

The protein belongs to the ABC transporter superfamily. sn-glycerol-3-phosphate importer (TC 3.A.1.1.3) family. The complex is composed of two ATP-binding proteins (UgpC), two transmembrane proteins (UgpA and UgpE) and a solute-binding protein (UgpB).

The protein localises to the cell inner membrane. The catalysed reaction is sn-glycerol 3-phosphate(out) + ATP + H2O = sn-glycerol 3-phosphate(in) + ADP + phosphate + H(+). In terms of biological role, part of the ABC transporter complex UgpBAEC involved in sn-glycerol-3-phosphate (G3P) import. Responsible for energy coupling to the transport system. The protein is sn-glycerol-3-phosphate import ATP-binding protein UgpC of Shigella sonnei (strain Ss046).